Consider the following 106-residue polypeptide: uncharacterized protein (106 aa).

Helical transmembrane passes span 43–63 (CSTI…LAIV) and 86–106 (IPEL…FSLF).

It is found in the membrane. This is an uncharacterized protein from Saccharomyces cerevisiae (strain ATCC 204508 / S288c) (Baker's yeast).